The following is a 525-amino-acid chain: Glutathione hydrolase-like YwrD proenzyme (525 aa).

Thr339 acts as the Nucleophile in catalysis.

It belongs to the gamma-glutamyltransferase family. As to quaternary structure, this enzyme consists of two polypeptide chains, which are synthesized from a single polypeptide. Post-translationally, cleaved by autocatalysis into a large and a small subunit.

The catalysed reaction is an N-terminal (5-L-glutamyl)-[peptide] + an alpha-amino acid = 5-L-glutamyl amino acid + an N-terminal L-alpha-aminoacyl-[peptide]. The enzyme catalyses glutathione + H2O = L-cysteinylglycine + L-glutamate. It carries out the reaction an S-substituted glutathione + H2O = an S-substituted L-cysteinylglycine + L-glutamate. In terms of biological role, overexpressed protein with an N-terminal His tag has been reported not to hydrolyze glutathione; it is not clear if the construct is processed to 2 subunits. This is Glutathione hydrolase-like YwrD proenzyme (ywrD) from Bacillus subtilis (strain 168).